The primary structure comprises 543 residues: Chaperonin GroEL (543 aa).

Residues 29 to 32, 86 to 90, glycine 413, 476 to 478, and aspartate 492 each bind ATP; these read TLGP, DGTTT, and NAA.

It belongs to the chaperonin (HSP60) family. In terms of assembly, forms a cylinder of 14 subunits composed of two heptameric rings stacked back-to-back. Interacts with the co-chaperonin GroES.

It localises to the cytoplasm. It catalyses the reaction ATP + H2O + a folded polypeptide = ADP + phosphate + an unfolded polypeptide.. In terms of biological role, together with its co-chaperonin GroES, plays an essential role in assisting protein folding. The GroEL-GroES system forms a nano-cage that allows encapsulation of the non-native substrate proteins and provides a physical environment optimized to promote and accelerate protein folding. The polypeptide is Chaperonin GroEL (Streptococcus pyogenes serotype M3 (strain SSI-1)).